The chain runs to 37 residues: Potassium channel toxin alpha-KTx 1.4 (37 aa).

3 disulfides stabilise this stretch: C7–C28, C13–C33, and C17–C35.

The protein belongs to the short scorpion toxin superfamily. Potassium channel inhibitor family. Alpha-KTx 01 subfamily. Expressed by the venom gland.

It is found in the secreted. Blocks selectively the high conductance calcium-activated (maxi-K) potassium channels. This Centruroides limbatus (Bark scorpion) protein is Potassium channel toxin alpha-KTx 1.4.